We begin with the raw amino-acid sequence, 352 residues long: Quinolinate synthase (352 aa).

Iminosuccinate-binding residues include H48 and S69. C114 lines the [4Fe-4S] cluster pocket. Iminosuccinate is bound by residues 140-142 (YAN) and S157. C201 contributes to the [4Fe-4S] cluster binding site. Iminosuccinate contacts are provided by residues 227–229 (HPE) and T244. Residue C298 participates in [4Fe-4S] cluster binding.

The protein belongs to the quinolinate synthase family. Type 1 subfamily. [4Fe-4S] cluster serves as cofactor.

It is found in the cytoplasm. The catalysed reaction is iminosuccinate + dihydroxyacetone phosphate = quinolinate + phosphate + 2 H2O + H(+). It functions in the pathway cofactor biosynthesis; NAD(+) biosynthesis; quinolinate from iminoaspartate: step 1/1. Functionally, catalyzes the condensation of iminoaspartate with dihydroxyacetone phosphate to form quinolinate. This Pseudomonas aeruginosa (strain UCBPP-PA14) protein is Quinolinate synthase.